The following is a 208-amino-acid chain: Thiamine-phosphate synthase (208 aa).

4-amino-2-methyl-5-(diphosphooxymethyl)pyrimidine is bound by residues 37 to 41 (QYREK) and Asn-73. Positions 74 and 93 each coordinate Mg(2+). Residue Ser-112 coordinates 4-amino-2-methyl-5-(diphosphooxymethyl)pyrimidine. A 2-[(2R,5Z)-2-carboxy-4-methylthiazol-5(2H)-ylidene]ethyl phosphate-binding site is contributed by 139–141 (TIS). Residue Lys-142 coordinates 4-amino-2-methyl-5-(diphosphooxymethyl)pyrimidine. 2-[(2R,5Z)-2-carboxy-4-methylthiazol-5(2H)-ylidene]ethyl phosphate contacts are provided by residues Gly-171 and 191–192 (IS).

It belongs to the thiamine-phosphate synthase family. It depends on Mg(2+) as a cofactor.

The catalysed reaction is 2-[(2R,5Z)-2-carboxy-4-methylthiazol-5(2H)-ylidene]ethyl phosphate + 4-amino-2-methyl-5-(diphosphooxymethyl)pyrimidine + 2 H(+) = thiamine phosphate + CO2 + diphosphate. It carries out the reaction 2-(2-carboxy-4-methylthiazol-5-yl)ethyl phosphate + 4-amino-2-methyl-5-(diphosphooxymethyl)pyrimidine + 2 H(+) = thiamine phosphate + CO2 + diphosphate. The enzyme catalyses 4-methyl-5-(2-phosphooxyethyl)-thiazole + 4-amino-2-methyl-5-(diphosphooxymethyl)pyrimidine + H(+) = thiamine phosphate + diphosphate. Its pathway is cofactor biosynthesis; thiamine diphosphate biosynthesis; thiamine phosphate from 4-amino-2-methyl-5-diphosphomethylpyrimidine and 4-methyl-5-(2-phosphoethyl)-thiazole: step 1/1. Functionally, condenses 4-methyl-5-(beta-hydroxyethyl)thiazole monophosphate (THZ-P) and 2-methyl-4-amino-5-hydroxymethyl pyrimidine pyrophosphate (HMP-PP) to form thiamine monophosphate (TMP). This chain is Thiamine-phosphate synthase, found in Listeria welshimeri serovar 6b (strain ATCC 35897 / DSM 20650 / CCUG 15529 / CIP 8149 / NCTC 11857 / SLCC 5334 / V8).